Reading from the N-terminus, the 147-residue chain is 3-dehydroquinate dehydratase (147 aa).

The active-site Proton acceptor is the Tyr-24. Asn-75, His-81, and Asp-88 together coordinate substrate. His-101 serves as the catalytic Proton donor. Substrate contacts are provided by residues 102–103 and Arg-112; that span reads IS.

This sequence belongs to the type-II 3-dehydroquinase family. Homododecamer.

The enzyme catalyses 3-dehydroquinate = 3-dehydroshikimate + H2O. The protein operates within metabolic intermediate biosynthesis; chorismate biosynthesis; chorismate from D-erythrose 4-phosphate and phosphoenolpyruvate: step 3/7. Its function is as follows. Catalyzes a trans-dehydration via an enolate intermediate. The chain is 3-dehydroquinate dehydratase from Cereibacter sphaeroides (strain KD131 / KCTC 12085) (Rhodobacter sphaeroides).